A 321-amino-acid chain; its full sequence is Methenyltetrahydromethanopterin cyclohydrolase (321 aa).

Belongs to the MCH family.

It localises to the cytoplasm. The catalysed reaction is 5,10-methenyl-5,6,7,8-tetrahydromethanopterin + H2O = N(5)-formyl-5,6,7,8-tetrahydromethanopterin + H(+). It functions in the pathway one-carbon metabolism; methanogenesis from CO(2); 5,10-methenyl-5,6,7,8-tetrahydromethanopterin from CO(2): step 3/3. In terms of biological role, catalyzes the reversible interconversion of 5-formyl-H(4)MPT to methenyl-H(4)MPT(+). The sequence is that of Methenyltetrahydromethanopterin cyclohydrolase from Methanosarcina mazei (strain ATCC BAA-159 / DSM 3647 / Goe1 / Go1 / JCM 11833 / OCM 88) (Methanosarcina frisia).